The chain runs to 367 residues: 3-methyl-2-oxobutanoate dehydrogenase subunit alpha (367 aa).

Thiamine diphosphate-binding positions include Gln99–Arg101, Pro141–Ile142, Gly170–Glu176, Asn200–Ile204, and His269. Tyr100 provides a ligand contact to substrate. Positions 171 and 200 each coordinate Mg(2+).

In terms of assembly, heteromer of E1 alpha (BkdA) and beta (BkdB) subunits. Part of the BCKADH complex, consisting of multiple copies of BkdA/BkdB (E1), BkdC (E2) and Lpd (E3). Mg(2+) is required as a cofactor. It depends on thiamine diphosphate as a cofactor.

It catalyses the reaction N(6)-[(R)-lipoyl]-L-lysyl-[protein] + 3-methyl-2-oxobutanoate + H(+) = N(6)-[(R)-S(8)-2-methylpropanoyldihydrolipoyl]-L-lysyl-[protein] + CO2. Component of the branched-chain alpha-ketoacid dehydrogenase (BCKADH) complex, that catalyzes the overall conversion of branched-chain alpha-ketoacids to acyl-CoA and CO(2). The sequence is that of 3-methyl-2-oxobutanoate dehydrogenase subunit alpha (bkdA) from Mycobacterium tuberculosis (strain CDC 1551 / Oshkosh).